We begin with the raw amino-acid sequence, 472 residues long: Nucleoporin NUP49/NSP49 (472 aa).

The stretch at 2 to 3 (FG) is one FG 1 repeat. A GLFG 1 repeat occupies 14–17 (GLFG). Residues 28 to 104 (NTGFSFGGTQ…TANTGGGLFG (77 aa)) are disordered. Residues 33–34 (FG) form an FG 2 repeat. One copy of the GLFG 2 repeat lies at 48–51 (GLFG). Positions 64–80 (SFGQQQQQSQTNAFGGS) are enriched in low complexity. 2 FG repeats span residues 65 to 66 (FG) and 77 to 78 (FG). GLFG repeat units follow at residues 86 to 89 (GLFG) and 101 to 104 (GLFG). One copy of the SLFG 1 repeat lies at 113–116 (SLFG). GLFG repeat units lie at residues 125 to 128 (GLFG) and 148 to 151 (GLFG). The SLFG 2 repeat unit spans residues 159–162 (SLFG). The GLFG 7; approximate repeat unit spans residues 175 to 178 (GMFG). One copy of the SLFG 3 repeat lies at 185–188 (SLFG). The GLFG 8 repeat unit spans residues 199–202 (GLFG). Residues 210–213 (SLFG) form an SLFG 4 repeat. Residues 211 to 242 (LFGSSNNNNNNNNSNNIMSASGGLFGNQQQQL) are disordered. The span at 214–226 (SSNNNNNNNNSNN) shows a compositional bias: low complexity. The GLFG 9 repeat unit spans residues 233–236 (GLFG).

Belongs to the nucleoporin GLFG family. In terms of assembly, component of the nuclear pore complex (NPC). NPC constitutes the exclusive means of nucleocytoplasmic transport. NPCs allow the passive diffusion of ions and small molecules and the active, nuclear transport receptor-mediated bidirectional transport of macromolecules such as proteins, RNAs, ribonucleoparticles (RNPs), and ribosomal subunits across the nuclear envelope. Due to its 8-fold rotational symmetry, all subunits are present with 8 copies or multiples thereof. NUP49 is part of the NUP57 subcomplex (NIC96, NSP1, NUP49, NUP57) interacting with NUP57. Interacts through its FG repeats with karyopherins.

The protein localises to the nucleus. Its subcellular location is the nuclear pore complex. It is found in the nucleus membrane. Functionally, functions as a component of the nuclear pore complex (NPC). NPC components, collectively referred to as nucleoporins (NUPs), can play the role of both NPC structural components and of docking or interaction partners for transiently associated nuclear transport factors. Active directional transport is assured by both, a Phe-Gly (FG) repeat affinity gradient for these transport factors across the NPC and a transport cofactor concentration gradient across the nuclear envelope (GSP1 and GSP2 GTPases associated predominantly with GTP in the nucleus, with GDP in the cytoplasm). NUP49 plays an important role in several nuclear transport pathways including poly(A)+ RNA, tRNA, and pre-ribosome transport. In Saccharomyces cerevisiae (strain ATCC 204508 / S288c) (Baker's yeast), this protein is Nucleoporin NUP49/NSP49 (NUP49).